Consider the following 481-residue polypeptide: Glutamate--tRNA ligase (481 aa).

Positions 10–20 match the 'HIGH' region motif; it reads PSPTGHLHIGN. Residues 251–255 carry the 'KMSKS' region motif; it reads KLSKR. Lysine 254 is a binding site for ATP.

This sequence belongs to the class-I aminoacyl-tRNA synthetase family. Glutamate--tRNA ligase type 1 subfamily. As to quaternary structure, monomer.

Its subcellular location is the cytoplasm. The enzyme catalyses tRNA(Glu) + L-glutamate + ATP = L-glutamyl-tRNA(Glu) + AMP + diphosphate. Functionally, catalyzes the attachment of glutamate to tRNA(Glu) in a two-step reaction: glutamate is first activated by ATP to form Glu-AMP and then transferred to the acceptor end of tRNA(Glu). The sequence is that of Glutamate--tRNA ligase from Exiguobacterium sibiricum (strain DSM 17290 / CCUG 55495 / CIP 109462 / JCM 13490 / 255-15).